We begin with the raw amino-acid sequence, 574 residues long: 2-succinyl-5-enolpyruvyl-6-hydroxy-3-cyclohexene-1-carboxylate synthase (574 aa).

This sequence belongs to the TPP enzyme family. MenD subfamily. Homodimer. Mg(2+) serves as cofactor. Requires Mn(2+) as cofactor. It depends on thiamine diphosphate as a cofactor.

It carries out the reaction isochorismate + 2-oxoglutarate + H(+) = 5-enolpyruvoyl-6-hydroxy-2-succinyl-cyclohex-3-ene-1-carboxylate + CO2. It participates in quinol/quinone metabolism; 1,4-dihydroxy-2-naphthoate biosynthesis; 1,4-dihydroxy-2-naphthoate from chorismate: step 2/7. It functions in the pathway cofactor biosynthesis; phylloquinone biosynthesis. In terms of biological role, catalyzes the thiamine diphosphate-dependent decarboxylation of 2-oxoglutarate and the subsequent addition of the resulting succinic semialdehyde-thiamine pyrophosphate anion to isochorismate to yield 2-succinyl-5-enolpyruvyl-6-hydroxy-3-cyclohexene-1-carboxylate (SEPHCHC). This is 2-succinyl-5-enolpyruvyl-6-hydroxy-3-cyclohexene-1-carboxylate synthase from Prochlorococcus marinus (strain SARG / CCMP1375 / SS120).